Reading from the N-terminus, the 548-residue chain is Solute carrier family 22 member 7 (548 aa).

The helical transmembrane segment at 21–41 (VALLALPRVLLPLHFLLPIFL) threads the bilayer. A glycan (N-linked (GlcNAc...) asparagine) is linked at N91. 11 consecutive transmembrane segments (helical) span residues 146–166 (AASTFFFAGVLVGAVAFGYLS), 180–200 (VSTLVLGLASAASVSYVMFAI), 204–224 (LTGSALAGFTIIVMPLELEWL), 234–254 (VLSSTFWTGGVMLLALVGYLI), 259–279 (WLLLAVTLPCAPGILSLWWVP), 346–366 (ISLCCVVVWFGVNFSYYGLSL), 376–397 (YQTQLLFGAVELPSKLLVYLSV), 404–423 (LTQAGTLLGTALAFGTRLLV), 432–452 (TVLAVMGKAFSEAAFTTAYLF), 466–486 (MGLTALVGRLGGSLAPLAALL), and 493–513 (LPKLTYGGIALLAAGTALLLP). The active-site Important for glutamate counteranion efflux is the F441. Residues 522–548 (ETIQDVERKSAPTSLQEEEMPMKQVQN) form a disordered region.

It belongs to the major facilitator (TC 2.A.1) superfamily. Organic cation transporter (TC 2.A.1.19) family. As to expression, mainly expressed in liver and kidney. In kidney, expressed in proximal tubular cells. Also expressed in pancreas, small intestine, spinal cord, lung, brain and heart. Expressed in fetal liver.

Its subcellular location is the basolateral cell membrane. The protein localises to the apical cell membrane. It localises to the cell membrane. The protein resides in the cytoplasm. It is found in the cytosol. It catalyses the reaction orotate(out) + L-glutamate(in) = orotate(in) + L-glutamate(out). The catalysed reaction is 3',5'-cyclic GMP(in) = 3',5'-cyclic GMP(out). It carries out the reaction GMP(in) = GMP(out). The enzyme catalyses 2'-deoxyguanosine(in) = 2'-deoxyguanosine(out). It catalyses the reaction GDP(in) = GDP(out). The catalysed reaction is guanosine(in) = guanosine(out). It carries out the reaction GTP(in) = GTP(out). The enzyme catalyses 3',5'-cyclic AMP(in) = 3',5'-cyclic AMP(out). It catalyses the reaction creatinine(in) = creatinine(out). The catalysed reaction is prostaglandin E2(out) = prostaglandin E2(in). It carries out the reaction 2-oxoglutarate(in) = 2-oxoglutarate(out). The enzyme catalyses glutarate(in) = glutarate(out). It catalyses the reaction urate(out) = urate(in). The catalysed reaction is estrone 3-sulfate(out) = estrone 3-sulfate(in). It carries out the reaction prostaglandin F2alpha(out) = prostaglandin F2alpha(in). In terms of biological role, functions as a Na(+)-independent bidirectional multispecific transporter. Contributes to the renal and hepatic elimination of endogenous organic compounds from the systemic circulation into the urine and bile, respectively. Capable of transporting a wide range of purine and pyrimidine nucleobases, nucleosides and nucleotides, with cGMP, 2'deoxyguanosine and GMP being the preferred substrates. Functions as a pH- and chloride-independent cGMP bidirectional facilitative transporter that can regulate both intracellular and extracellular levels of cGMP and may be involved in cGMP signaling pathways. Mediates orotate/glutamate bidirectional exchange and most likely display a physiological role in hepatic release of glutamate into the blood. Involved in renal secretion and possible reabsorption of creatinine. Able to uptake prostaglandin E2 (PGE2) and may contribute to PGE2 renal excretion. Also transports alpha-ketoglutarate and urate. Apart from the orotate/glutamate exchange, the counterions for the uptake of other SLC22A7/OAT2 substrates remain to be identified. Non functional transporter. Functionally, involved in the uptake of prostaglandin F2-alpha (PGF2-alpha). The polypeptide is Solute carrier family 22 member 7 (Homo sapiens (Human)).